Reading from the N-terminus, the 233-residue chain is 2,3,4,5-tetrahydropyridine-2,6-dicarboxylate N-acetyltransferase (233 aa).

This sequence belongs to the transferase hexapeptide repeat family. DapH subfamily.

It carries out the reaction (S)-2,3,4,5-tetrahydrodipicolinate + acetyl-CoA + H2O = L-2-acetamido-6-oxoheptanedioate + CoA. It participates in amino-acid biosynthesis; L-lysine biosynthesis via DAP pathway; LL-2,6-diaminopimelate from (S)-tetrahydrodipicolinate (acetylase route): step 1/3. In terms of biological role, catalyzes the transfer of an acetyl group from acetyl-CoA to tetrahydrodipicolinate. This chain is 2,3,4,5-tetrahydropyridine-2,6-dicarboxylate N-acetyltransferase, found in Thermotoga petrophila (strain ATCC BAA-488 / DSM 13995 / JCM 10881 / RKU-1).